We begin with the raw amino-acid sequence, 478 residues long: DKDTYKVSGGLHGVGVSCVNALSSLLVATVHREGKVFQQKYSTGNPQGAVEVVGQSDRTGTTIYFEPDATIFATTEYKYETVSKRLRELSYLNKGIRLTLTDLRETDEQGRHLYEEFFSEGGLKEFVEHLDSTRQPLLPAPIHVEKTDGDIPVEVALIYNNSYSENVFSYVNNINTHEGGTHVSGFRRALTRTLKSYADKSGMLEKAKVEITGDDFREGLTAVISIKVAEPQFEGQTKTKLGNSDAIGAVDNAVSEILGYYLEENPREAKLIIQKVILAAQARQAARKAREMVQRKNVMGGTSLPGKLADCSDTNPERCELYLVEGDSAGGSAKQGRDRSFQAILPLRGKILNVEKAQEYKIYDNEEIKNMITAMGVTFGTEEDSKALNLTKLRYHKIIIMTDADVDGSHIRTLILTFFFRYMRELIEQGYLYVALPPLYIVKKGKEERYAWSDAERDAIIREIAPEGKEDSVGIQRY.

A Toprim domain is found at 319–438; that stretch reads CELYLVEGDS…QGYLYVALPP (120 aa). Mg(2+) is bound by residues E325, D403, and D405.

Belongs to the type II topoisomerase GyrB family. As to quaternary structure, heterotetramer, composed of two GyrA and two GyrB chains. In the heterotetramer, GyrA contains the active site tyrosine that forms a transient covalent intermediate with DNA, while GyrB binds cofactors and catalyzes ATP hydrolysis. The cofactor is Mg(2+). It depends on Mn(2+) as a cofactor. Requires Ca(2+) as cofactor.

The protein localises to the cytoplasm. It carries out the reaction ATP-dependent breakage, passage and rejoining of double-stranded DNA.. In terms of biological role, a type II topoisomerase that negatively supercoils closed circular double-stranded (ds) DNA in an ATP-dependent manner to modulate DNA topology and maintain chromosomes in an underwound state. Negative supercoiling favors strand separation, and DNA replication, transcription, recombination and repair, all of which involve strand separation. Also able to catalyze the interconversion of other topological isomers of dsDNA rings, including catenanes and knotted rings. Type II topoisomerases break and join 2 DNA strands simultaneously in an ATP-dependent manner. In Eisenibacter elegans (Flexibacter elegans), this protein is DNA gyrase subunit B (gyrB).